The primary structure comprises 408 residues: Intracellular coagulation inhibitor 2 (408 aa).

Positions 1–22 are cleaved as a signal peptide; it reads MLSRRTLDCCLVMLIVSTTFCQ. Cys50 and Cys249 are disulfide-bonded. A glycan (N-linked (GlcNAc...) asparagine) is linked at Asn174.

Belongs to the serpin family. In terms of assembly, monomer. Forms a covalent heterodimer with clotting factor C chain B. Forms a covalent heterodimer with proclotting enzyme heavy chain. In terms of tissue distribution, specifically expressed in hemocytes (at protein level).

It localises to the secreted. In terms of biological role, serine protease inhibitor that inhibits proclotting enzyme and to a lesser extent clotting factor C and clotting factor G. The polypeptide is Intracellular coagulation inhibitor 2 (Tachypleus tridentatus (Japanese horseshoe crab)).